The sequence spans 398 residues: Phosphoglycerate kinase (398 aa).

Substrate is bound by residues 21 to 23 (DFN), arginine 36, 59 to 62 (HLGR), arginine 119, and arginine 157. ATP is bound by residues lysine 208, glycine 296, glutamate 327, and 354 to 357 (GGDS).

This sequence belongs to the phosphoglycerate kinase family. Monomer.

It is found in the cytoplasm. It carries out the reaction (2R)-3-phosphoglycerate + ATP = (2R)-3-phospho-glyceroyl phosphate + ADP. Its pathway is carbohydrate degradation; glycolysis; pyruvate from D-glyceraldehyde 3-phosphate: step 2/5. The polypeptide is Phosphoglycerate kinase (Streptococcus mutans serotype c (strain ATCC 700610 / UA159)).